Consider the following 509-residue polypeptide: ATP synthase subunit alpha (509 aa).

169 to 176 (GDRQTGKT) provides a ligand contact to ATP.

The protein belongs to the ATPase alpha/beta chains family. In terms of assembly, F-type ATPases have 2 components, CF(1) - the catalytic core - and CF(0) - the membrane proton channel. CF(1) has five subunits: alpha(3), beta(3), gamma(1), delta(1), epsilon(1). CF(0) has three main subunits: a(1), b(2) and c(9-12). The alpha and beta chains form an alternating ring which encloses part of the gamma chain. CF(1) is attached to CF(0) by a central stalk formed by the gamma and epsilon chains, while a peripheral stalk is formed by the delta and b chains.

The protein resides in the cell inner membrane. The enzyme catalyses ATP + H2O + 4 H(+)(in) = ADP + phosphate + 5 H(+)(out). Functionally, produces ATP from ADP in the presence of a proton gradient across the membrane. The alpha chain is a regulatory subunit. This chain is ATP synthase subunit alpha, found in Methylocella silvestris (strain DSM 15510 / CIP 108128 / LMG 27833 / NCIMB 13906 / BL2).